Consider the following 220-residue polypeptide: DNA mismatch repair protein MutH (220 aa).

It belongs to the MutH family.

It localises to the cytoplasm. Sequence-specific endonuclease that cleaves unmethylated GATC sequences. It is involved in DNA mismatch repair. This chain is DNA mismatch repair protein MutH, found in Buchnera aphidicola subsp. Baizongia pistaciae (strain Bp).